Consider the following 234-residue polypeptide: Glycoprotein BDLF3 (234 aa).

Positions 1-28 (MAHARDKAGAVMAMILICETSLIWTSSG) are cleaved as a signal peptide. Residues 29-62 (SSTASAGNVTGTTAVTTPSPSASGPSTNQSTTLT) are disordered. Asn36, Asn56, Asn77, Asn96, Asn101, Asn110, Asn127, Asn144, and Asn159 each carry an N-linked (GlcNAc...) asparagine; by host glycan. The disordered stretch occupies residues 116–138 (AGTGTSTGVTSNVTTRSSSTTSA). A helical membrane pass occupies residues 187–207 (LVFVGLTFLMLILIFAAGLMM).

This sequence belongs to the Epstein-Barr virus BDLF3 protein family.

It localises to the membrane. This chain is Glycoprotein BDLF3, found in Homo sapiens (Human).